Reading from the N-terminus, the 355-residue chain is Protein-glutamate methylesterase/protein-glutamine glutaminase 3 (355 aa).

Residues 8–126 (RVLVVDDSPT…AEELRRWGKE (119 aa)) enclose the Response regulatory domain. D59 carries the post-translational modification 4-aspartylphosphate. One can recognise a CheB-type methylesterase domain in the interval 152 to 337 (PPTGARVDIF…LASMPELILQ (186 aa)). Catalysis depends on residues S166, H193, and D284.

The protein belongs to the CheB family. In terms of processing, phosphorylated by CheA. Phosphorylation of the N-terminal regulatory domain activates the methylesterase activity.

The protein localises to the cytoplasm. It catalyses the reaction [protein]-L-glutamate 5-O-methyl ester + H2O = L-glutamyl-[protein] + methanol + H(+). It carries out the reaction L-glutaminyl-[protein] + H2O = L-glutamyl-[protein] + NH4(+). Involved in chemotaxis. Part of a chemotaxis signal transduction system that modulates chemotaxis in response to various stimuli. Catalyzes the demethylation of specific methylglutamate residues introduced into the chemoreceptors (methyl-accepting chemotaxis proteins or MCP) by CheR. Also mediates the irreversible deamidation of specific glutamine residues to glutamic acid. The protein is Protein-glutamate methylesterase/protein-glutamine glutaminase 3 of Myxococcus xanthus (strain DK1622).